The primary structure comprises 460 residues: Orexin receptor type 2 (460 aa).

At Met-1–Glu-54 the chain is on the extracellular side. N-linked (GlcNAc...) asparagine glycans are attached at residues Asn-14 and Asn-22. Residues Asp-33–His-49 are required for response to orexin-A. The helical transmembrane segment at Trp-55–Val-75 threads the bilayer. The Cytoplasmic portion of the chain corresponds to Cys-76–Val-88. Residues Thr-89–Ala-110 form a helical membrane-spanning segment. Over Thr-111–Cys-127 the chain is Extracellular. Cys-127 and Cys-210 form a disulfide bridge. A helical transmembrane segment spans residues Lys-128–Leu-150. Residues Asp-151–Arg-170 are Cytoplasmic-facing. Residues Asn-171–Met-191 traverse the membrane as a helical segment. Residues Glu-192 to Met-222 lie on the Extracellular side of the membrane. Residue Asn-202 is glycosylated (N-linked (GlcNAc...) asparagine). A helical transmembrane segment spans residues Tyr-223 to Tyr-243. Residues Leu-244–Arg-304 lie on the Cytoplasmic side of the membrane. A helical transmembrane segment spans residues Met-305–Leu-326. Residues Lys-327–Val-342 are Extracellular-facing. A helical transmembrane segment spans residues Tyr-343 to Phe-366. The Cytoplasmic portion of the chain corresponds to Leu-367 to Val-460.

This sequence belongs to the G-protein coupled receptor 1 family. As to expression, expressed in the brain in the cerebral cortex, septal nuclei, hippocampus, medial thalamic groups, dorsal and median raphe nuclei, and many hypothalamic nuclei including the tuberomammillary nucleus, dorsomedial hypothalamus, paraventricular hypothalamic nucleus, and ventral premammillary nucleus. Not detected in the spleen, lung, liver, skeletal muscle, kidney and testis. Orexin receptor mRNA expression has also been reported in the adrenal gland, enteric nervous system, and pancreas.

It localises to the cell membrane. Nonselective, high-affinity receptor for both orexin-A and orexin-B neuropeptides. Triggers an increase in cytoplasmic Ca(2+) levels in response to orexin-A binding. The polypeptide is Orexin receptor type 2 (Hcrtr2) (Rattus norvegicus (Rat)).